The primary structure comprises 349 residues: Phosphate acyltransferase (349 aa).

Belongs to the PlsX family. In terms of assembly, homodimer. Probably interacts with PlsY.

Its subcellular location is the cytoplasm. The enzyme catalyses a fatty acyl-[ACP] + phosphate = an acyl phosphate + holo-[ACP]. It functions in the pathway lipid metabolism; phospholipid metabolism. Catalyzes the reversible formation of acyl-phosphate (acyl-PO(4)) from acyl-[acyl-carrier-protein] (acyl-ACP). This enzyme utilizes acyl-ACP as fatty acyl donor, but not acyl-CoA. In Rhodospirillum rubrum (strain ATCC 11170 / ATH 1.1.1 / DSM 467 / LMG 4362 / NCIMB 8255 / S1), this protein is Phosphate acyltransferase.